The chain runs to 314 residues: tRNA dimethylallyltransferase (314 aa).

The segment at 1–25 (MAEEPQRSPAPTSPFAFTVPSNSLS) is disordered. 40–47 (GPTASGKS) is an ATP binding site. 42-47 (TASGKS) contributes to the substrate binding site.

This sequence belongs to the IPP transferase family. As to quaternary structure, monomer. Requires Mg(2+) as cofactor.

It carries out the reaction adenosine(37) in tRNA + dimethylallyl diphosphate = N(6)-dimethylallyladenosine(37) in tRNA + diphosphate. Functionally, catalyzes the transfer of a dimethylallyl group onto the adenine at position 37 in tRNAs that read codons beginning with uridine, leading to the formation of N6-(dimethylallyl)adenosine (i(6)A). The chain is tRNA dimethylallyltransferase from Cereibacter sphaeroides (strain ATCC 17023 / DSM 158 / JCM 6121 / CCUG 31486 / LMG 2827 / NBRC 12203 / NCIMB 8253 / ATH 2.4.1.) (Rhodobacter sphaeroides).